The primary structure comprises 1483 residues: Mediator of RNA polymerase II transcription subunit 26 (1483 aa).

The region spanning 8–85 (ELTTHLSQAL…KKWREMVGIQ (78 aa)) is the TFIIS N-terminal domain. Residues S204, S258, and S421 each carry the phosphoserine modification. Disordered regions lie at residues 227–278 (SDSD…GQVA), 414–438 (HEYL…SKGV), 480–518 (VSMQ…SMNS), 541–575 (TDSD…SIQS), and 989–1041 (DKSS…MKRR). A compositionally biased stretch (basic residues) spans 426–435 (PKRRGRKKGS). A compositionally biased stretch (low complexity) spans 480 to 495 (VSMQSSASNLSNSSTN). A compositionally biased stretch (polar residues) spans 496–518 (RDLPSHTTFPRQTSSCSDTSMNS). A Phosphothreonine modification is found at T541. Residues 550 to 564 (PSHDSNKSQEIKECT) show a composition bias toward basic and acidic residues. The residue at position 551 (S551) is a Phosphoserine. Composition is skewed to polar residues over residues 565-575 (SLDSNSNSIQS) and 989-999 (DKSSNTGCQGN). Positions 1000 to 1011 (SPYSSSSSSSYS) are enriched in low complexity. The segment covering 1020–1033 (ITKNLQNKNIQLNS) has biased composition (polar residues). S1177 is subject to Phosphoserine. T1179 is subject to Phosphothreonine.

This sequence belongs to the Mediator complex subunit 26 family. In terms of assembly, component of the Mediator complex. Interacts with MED6 and MED17.

Its subcellular location is the nucleus. Component of the Mediator complex, a coactivator involved in the regulated transcription of nearly all RNA polymerase II-dependent genes. Mediator functions as a bridge to convey information from gene-specific regulatory proteins to the basal RNA polymerase II transcription machinery. Mediator is recruited to promoters by direct interactions with regulatory proteins and serves as a scaffold for the assembly of a functional preinitiation complex with RNA polymerase II and the general transcription factors. Required for activated transcription of the MtnA gene. The chain is Mediator of RNA polymerase II transcription subunit 26 (MED26) from Drosophila melanogaster (Fruit fly).